The primary structure comprises 263 residues: Aquaglyceroporin (263 aa).

A disordered region spans residues M1 to R22. A run of 6 helical transmembrane segments spans residues K41–A61, G64–F84, L113–I133, V157–M177, L180–M200, and V222–G242.

It belongs to the MIP/aquaporin (TC 1.A.8) family. Multimer.

Its subcellular location is the vacuole membrane. The enzyme catalyses H2O(in) = H2O(out). It carries out the reaction glycerol(in) = glycerol(out). The catalysed reaction is urea(in) = urea(out). In terms of biological role, mediates water and glycerol transport across cell membranes. Permeable to selected sugar alcohols of up to five carbons and urea. Permeable to methylamine/methylammonium. The sequence is that of Aquaglyceroporin from Toxoplasma gondii (strain ATCC 50611 / Me49).